Consider the following 663-residue polypeptide: Transketolase 1 (663 aa).

Position 26 (histidine 26) interacts with substrate. Residue lysine 46 is modified to N6-acetyllysine. Thiamine diphosphate-binding positions include histidine 66 and 114–116 (GPL). Aspartate 155 contributes to the Mg(2+) binding site. Positions 156 and 185 each coordinate thiamine diphosphate. Asparagine 185 and isoleucine 187 together coordinate Mg(2+). Residues histidine 261, arginine 358, and serine 385 each coordinate substrate. Histidine 261 contributes to the thiamine diphosphate binding site. Glutamate 411 (proton donor) is an active-site residue. Phenylalanine 437 is a binding site for thiamine diphosphate. Substrate contacts are provided by histidine 461, aspartate 469, histidine 473, and arginine 520.

Belongs to the transketolase family. Homodimer. The cofactor is Mg(2+). Ca(2+) is required as a cofactor. Mn(2+) serves as cofactor. Requires Co(2+) as cofactor. It depends on thiamine diphosphate as a cofactor.

It carries out the reaction D-sedoheptulose 7-phosphate + D-glyceraldehyde 3-phosphate = aldehydo-D-ribose 5-phosphate + D-xylulose 5-phosphate. Catalyzes the transfer of a two-carbon ketol group from a ketose donor to an aldose acceptor, via a covalent intermediate with the cofactor thiamine pyrophosphate. Thus, catalyzes the reversible transfer of a two-carbon ketol group from sedoheptulose-7-phosphate to glyceraldehyde-3-phosphate, producing xylulose-5-phosphate and ribose-5-phosphate. The sequence is that of Transketolase 1 (tktA) from Escherichia coli (strain K12).